Consider the following 286-residue polypeptide: ATP synthase gamma chain (286 aa).

This sequence belongs to the ATPase gamma chain family. In terms of assembly, F-type ATPases have 2 components, CF(1) - the catalytic core - and CF(0) - the membrane proton channel. CF(1) has five subunits: alpha(3), beta(3), gamma(1), delta(1), epsilon(1). CF(0) has three main subunits: a, b and c.

It is found in the cell membrane. Functionally, produces ATP from ADP in the presence of a proton gradient across the membrane. The gamma chain is believed to be important in regulating ATPase activity and the flow of protons through the CF(0) complex. The polypeptide is ATP synthase gamma chain (Ruminococcus albus (strain ATCC 27210 / DSM 20455 / JCM 14654 / NCDO 2250 / 7)).